The chain runs to 117 residues: Aspartate 1-decarboxylase (117 aa).

Ser-25 serves as the catalytic Schiff-base intermediate with substrate; via pyruvic acid. Pyruvic acid (Ser) is present on Ser-25. Thr-57 contacts substrate. The active-site Proton donor is Tyr-58. 73–75 (GAA) lines the substrate pocket.

Belongs to the PanD family. Heterooctamer of four alpha and four beta subunits. The cofactor is pyruvate. Is synthesized initially as an inactive proenzyme, which is activated by self-cleavage at a specific serine bond to produce a beta-subunit with a hydroxyl group at its C-terminus and an alpha-subunit with a pyruvoyl group at its N-terminus.

Its subcellular location is the cytoplasm. It catalyses the reaction L-aspartate + H(+) = beta-alanine + CO2. The protein operates within cofactor biosynthesis; (R)-pantothenate biosynthesis; beta-alanine from L-aspartate: step 1/1. Its function is as follows. Catalyzes the pyruvoyl-dependent decarboxylation of aspartate to produce beta-alanine. The polypeptide is Aspartate 1-decarboxylase (Bacteroides fragilis (strain ATCC 25285 / DSM 2151 / CCUG 4856 / JCM 11019 / LMG 10263 / NCTC 9343 / Onslow / VPI 2553 / EN-2)).